Reading from the N-terminus, the 280-residue chain is Energy-coupling factor transporter ATP-binding protein EcfA2 (280 aa).

Residues 3–245 (INLQNVSYTY…VSLLEKKQLG (243 aa)) enclose the ABC transporter domain. Residue 40–47 (GHTGSGKS) participates in ATP binding.

The protein belongs to the ABC transporter superfamily. Energy-coupling factor EcfA family. Forms a stable energy-coupling factor (ECF) transporter complex composed of 2 membrane-embedded substrate-binding proteins (S component), 2 ATP-binding proteins (A component) and 2 transmembrane proteins (T component).

It localises to the cell membrane. Its function is as follows. ATP-binding (A) component of a common energy-coupling factor (ECF) ABC-transporter complex. Unlike classic ABC transporters this ECF transporter provides the energy necessary to transport a number of different substrates. This Streptococcus pyogenes serotype M3 (strain ATCC BAA-595 / MGAS315) protein is Energy-coupling factor transporter ATP-binding protein EcfA2.